A 142-amino-acid polypeptide reads, in one-letter code: Small ribosomal subunit protein uS11 (142 aa).

The tract at residues 1 to 21 (MPPKTRGAVRKPRRKDKKNIA) is disordered. Basic residues predominate over residues 7–17 (GAVRKPRRKDK).

This sequence belongs to the universal ribosomal protein uS11 family. In terms of assembly, part of the 30S ribosomal subunit. Interacts with proteins S7 and S18. Binds to IF-3.

Located on the platform of the 30S subunit, it bridges several disparate RNA helices of the 16S rRNA. Forms part of the Shine-Dalgarno cleft in the 70S ribosome. The chain is Small ribosomal subunit protein uS11 from Paenarthrobacter aurescens (strain TC1).